A 224-amino-acid polypeptide reads, in one-letter code: MEKKLSIAIDGPAAAGKSTVAKIVAEKKSYIYIDTGAMYRAITYAALQENVDLTDEEKLAELLKRTDIELITTKDGQKVFVNGTDVTEAIRTDEISNQVSIAAKHRSVREEMVKRQQQLGEKGGVVMDGRDIGTHVLPNAEVKIFLLASVEERAKRRYEENVKKGFDVNYETLIEEIARRDKLDSEREVSPLRKAEDALEIDTTSLSIQEVADKILEAVEQKSR.

Residue 11-19 (GPAAAGKST) coordinates ATP.

Belongs to the cytidylate kinase family. Type 1 subfamily.

The protein resides in the cytoplasm. The catalysed reaction is CMP + ATP = CDP + ADP. It carries out the reaction dCMP + ATP = dCDP + ADP. The sequence is that of Cytidylate kinase (cmk) from Bacillus subtilis (strain 168).